The sequence spans 66 residues: Sec-independent protein translocase protein TatA (66 aa).

A helical transmembrane segment spans residues 1 to 21; sequence MIGGLGMPELIIILVIILIIF. The interval 45–66 is disordered; it reads RDAELNEGDKDDKEKEQEKLDK.

The protein belongs to the TatA/E family. As to quaternary structure, the Tat system comprises two distinct complexes: a TatABC complex, containing multiple copies of TatA, TatB and TatC subunits, and a separate TatA complex, containing only TatA subunits. Substrates initially bind to the TatABC complex, which probably triggers association of the separate TatA complex to form the active translocon.

The protein resides in the cell inner membrane. In terms of biological role, part of the twin-arginine translocation (Tat) system that transports large folded proteins containing a characteristic twin-arginine motif in their signal peptide across membranes. TatA could form the protein-conducting channel of the Tat system. The sequence is that of Sec-independent protein translocase protein TatA from Desulforapulum autotrophicum (strain ATCC 43914 / DSM 3382 / VKM B-1955 / HRM2) (Desulfobacterium autotrophicum).